The sequence spans 189 residues: Protein OXIDATIVE STRESS 3 LIKE 2 (189 aa).

Disordered stretches follow at residues 22 to 49 (SSST…SSYN) and 128 to 147 (AMSQ…LPTL). Over residues 33–44 (NSDDDEGGENEI) the composition is skewed to acidic residues.

The protein localises to the nucleus. This Arabidopsis thaliana (Mouse-ear cress) protein is Protein OXIDATIVE STRESS 3 LIKE 2.